We begin with the raw amino-acid sequence, 375 residues long: Dual-specificity RNA methyltransferase RlmN (375 aa).

Residue glutamate 98 is the Proton acceptor of the active site. Residues 106-346 (GGKRRTLCVS…VRTTRGDDID (241 aa)) enclose the Radical SAM core domain. An intrachain disulfide couples cysteine 113 to cysteine 349. 3 residues coordinate [4Fe-4S] cluster: cysteine 120, cysteine 124, and cysteine 127. Residues 174–175 (GE), serine 206, 228–230 (SLH), and asparagine 306 contribute to the S-adenosyl-L-methionine site. Cysteine 349 acts as the S-methylcysteine intermediate in catalysis.

The protein belongs to the radical SAM superfamily. RlmN family. It depends on [4Fe-4S] cluster as a cofactor.

It localises to the cytoplasm. The catalysed reaction is adenosine(2503) in 23S rRNA + 2 reduced [2Fe-2S]-[ferredoxin] + 2 S-adenosyl-L-methionine = 2-methyladenosine(2503) in 23S rRNA + 5'-deoxyadenosine + L-methionine + 2 oxidized [2Fe-2S]-[ferredoxin] + S-adenosyl-L-homocysteine. It catalyses the reaction adenosine(37) in tRNA + 2 reduced [2Fe-2S]-[ferredoxin] + 2 S-adenosyl-L-methionine = 2-methyladenosine(37) in tRNA + 5'-deoxyadenosine + L-methionine + 2 oxidized [2Fe-2S]-[ferredoxin] + S-adenosyl-L-homocysteine. Specifically methylates position 2 of adenine 2503 in 23S rRNA and position 2 of adenine 37 in tRNAs. m2A2503 modification seems to play a crucial role in the proofreading step occurring at the peptidyl transferase center and thus would serve to optimize ribosomal fidelity. The protein is Dual-specificity RNA methyltransferase RlmN of Chromohalobacter salexigens (strain ATCC BAA-138 / DSM 3043 / CIP 106854 / NCIMB 13768 / 1H11).